Here is a 612-residue protein sequence, read N- to C-terminus: MRLKSFSTTLDTLRRRFNDSSSEEDKLEKNIQDETSIKEVSLQDAKQSDEKGVEEKVFNDESFSIDVAPKPEDELSGIVKARYLTEHSSRISFYICYFSIFLLFFAISFQAECYYSLTAYATSAFAGHSLLSTIAVANNIISAAIKPPLARLSDVFGRLEAFLFSLLLYLVGLILMAASTNVQTYAGGSVLYNAGYTGVELIMTIFMADTSSMANRSLVLGISYLPFVVTIWIGPRVAQEFYMHSTWRWGIAVWTILIPACSIPFLAVYSYYQFRAWREGALKGTLTINPVELFKKLDIIGLILMTAGLALVLLSISLASYDTGKWSDAKFIVMIIIGGLCLIAFVLYEIFVASFPALPFRLMREPTIGACCAMSFLFYITFYCWDNYYYSFLQVVHYTSITAAGYISYTYSFTSCATGFFLGILIRLTKRYKWYFVASIPVYILGQGLMIRYRGEQYNWGYQIMPQIIVGIGGGVIANLLTVAVQTVVSTENFAIVTALVSTVTPIGGAVGSAISGAIWNSVMPKRLEKNLPSDLKDQAYTIFESLTVQLSYTRGTDARNAIILSYSEVQKILTSVATGFAGAMIFPVWFVANPRLSTVKTHIFDSKESKV.

Phosphoserine is present on residues Ser5, Ser21, Ser22, Ser36, and Ser41. Transmembrane regions (helical) follow at residues 91–111 (ISFY…SFQA), 125–145 (FAGH…SAAI), 159–179 (LEAF…MAAS), 188–208 (GSVL…IFMA), 218–238 (LVLG…PRVA), 249–269 (WGIA…LAVY), 299–319 (IIGL…ISLA), 331–351 (FIVM…YEIF), 365–385 (EPTI…FYCW), 406–426 (YISY…GILI), 434–453 (WYFV…MIRY), 464–484 (IMPQ…LTVA), 495–515 (AIVT…GSAI), and 573–593 (ILTS…WFVA).

It belongs to the major facilitator superfamily.

The protein localises to the membrane. In terms of biological role, involved in the transport of siderophore iron and so has a role in iron homeostasis. This chain is Siderophore iron transporter 1 (str1), found in Schizosaccharomyces pombe (strain 972 / ATCC 24843) (Fission yeast).